Reading from the N-terminus, the 555-residue chain is Synaptotagmin-14 (555 aa).

Residues 1–24 (MAIEGGERTCGVHELICIRKVSPE) are Extracellular-facing. Residues 25 to 47 (AVGFLSAVGVFIILMLLLFLYIN) traverse the membrane as a helical; Signal-anchor for type III membrane protein segment. Over 48 to 555 (KKFCFENVGG…VCRWHALLES (508 aa)) the chain is Cytoplasmic. Disordered regions lie at residues 157–179 (TPPLDELQPPPYQDDSGSPHLSC) and 222–257 (GYEEDVPSDSTAVLSPEDMSAQGSSSQLPKPFDPEP). C2 domains follow at residues 260–379 (KYGT…SLPV) and 415–550 (SVPE…CRWH).

It belongs to the synaptotagmin family. In terms of assembly, homodimer. Can also form heterodimers. In terms of tissue distribution, highly expressed in fetal and adult brain tissue.

It is found in the membrane. May be involved in the trafficking and exocytosis of secretory vesicles in non-neuronal tissues. Is Ca(2+)-independent. The chain is Synaptotagmin-14 (SYT14) from Homo sapiens (Human).